Reading from the N-terminus, the 62-residue chain is Large ribosomal subunit protein uL30 (62 aa).

Belongs to the universal ribosomal protein uL30 family. In terms of assembly, part of the 50S ribosomal subunit.

This chain is Large ribosomal subunit protein uL30, found in Cereibacter sphaeroides (strain ATCC 17029 / ATH 2.4.9) (Rhodobacter sphaeroides).